The sequence spans 249 residues: Adapter protein MecA (249 aa).

This sequence belongs to the MecA family. In terms of assembly, homodimer.

In terms of biological role, enables the recognition and targeting of unfolded and aggregated proteins to the ClpC protease or to other proteins involved in proteolysis. This Streptococcus thermophilus (strain ATCC BAA-250 / LMG 18311) protein is Adapter protein MecA.